The primary structure comprises 235 residues: 5'-methylthioadenosine/S-adenosylhomocysteine nucleosidase (235 aa).

Glu-12 acts as the Proton acceptor in catalysis. Substrate-binding positions include Gly-78, Ile-152, and 173–174 (ME). Asp-197 serves as the catalytic Proton donor.

This sequence belongs to the PNP/UDP phosphorylase family. MtnN subfamily. Homodimer.

The enzyme catalyses S-adenosyl-L-homocysteine + H2O = S-(5-deoxy-D-ribos-5-yl)-L-homocysteine + adenine. The catalysed reaction is S-methyl-5'-thioadenosine + H2O = 5-(methylsulfanyl)-D-ribose + adenine. It catalyses the reaction 5'-deoxyadenosine + H2O = 5-deoxy-D-ribose + adenine. It participates in amino-acid biosynthesis; L-methionine biosynthesis via salvage pathway; S-methyl-5-thio-alpha-D-ribose 1-phosphate from S-methyl-5'-thioadenosine (hydrolase route): step 1/2. Catalyzes the irreversible cleavage of the glycosidic bond in both 5'-methylthioadenosine (MTA) and S-adenosylhomocysteine (SAH/AdoHcy) to adenine and the corresponding thioribose, 5'-methylthioribose and S-ribosylhomocysteine, respectively. Also cleaves 5'-deoxyadenosine, a toxic by-product of radical S-adenosylmethionine (SAM) enzymes, into 5-deoxyribose and adenine. Thus, is required for in vivo function of the radical SAM enzymes biotin synthase and lipoic acid synthase, that are inhibited by 5'-deoxyadenosine accumulation. This Proteus mirabilis (strain HI4320) protein is 5'-methylthioadenosine/S-adenosylhomocysteine nucleosidase.